The following is a 579-amino-acid chain: Folliculin (579 aa).

A disordered region spans residues 32-82 (GAGSGDGAGRGEPADEEEGGIQMSSRIRAHSPAEGASAESSSPGPKKSDMC). Phosphoserine is present on residues S62 and S73. Positions 63–76 (PAEGASAESSSPGP) are enriched in low complexity. A uDENN FLCN/SMCR8-type domain is found at 86-242 (RSLAAGHPGY…RNGNAARSLT (157 aa)). Positions 285-309 (QMEQLAELEEESESWDNSEAEEEEK) form a coiled coil. Over residues 294–308 (EESESWDNSEAEEEE) the composition is skewed to acidic residues. Residues 294–321 (EESESWDNSEAEEEEKGPALPEGAEGRE) are disordered. Residues S302, S406, S537, S542, and S571 each carry the phosphoserine modification. Residues 339 to 491 (QPRKLSVFKS…ILNKMEAALT (153 aa)) enclose the cDENN FLCN/SMCR8-type domain. The region spanning 493 to 558 (QNLSVDVVDQ…LLKFWMTGLS (66 aa)) is the dDENN FLCN/SMCR8-type domain.

The protein belongs to the folliculin family. In terms of assembly, interacts (via C-terminus) with FNIP1 or FNIP2 (via C-terminus). Component of the lysosomal folliculin complex (LFC), composed of FLCN, FNIP1 (or FNIP2), RagA/RRAGA or RagB/RRAGB GDP-bound, RagC/RRAGC or RagD/RRAGD GTP-bound, and Ragulator. Interaction with FNIP1 or FNIP2 mediates indirect interaction with the PRKAA1, PRKAB1 and PRKAG1 subunits of 5'-AMP-activated protein kinase (AMPK). Interacts with HSP90AA1 in the presence of FNIP1. Interacts with HSP70, STUB1, CDC37, AHSA1, CCT2, STIP1, PTGES3 and PPP5C. Interacts with GABARAP; interaction takes place in the presence of FNIP1 and/or FNIP2. Interacts with RILP; the interaction is direct and promotes association between RILP and RAB34. Interacts with KIF3A and KIF3B. Interacts with lactate dehydrogenase LDHA, but not LDHB; the interaction is direct, may preferentially bind LDHA dimers rather than tetramers, and regulates LDHA activity, acting as an uncompetitive inhibitor. In terms of processing, phosphorylation by ULK1 modulates the interaction with GABARAP and is required to regulate autophagy.

It is found in the lysosome membrane. The protein localises to the cytoplasm. It localises to the cytosol. The protein resides in the cell projection. Its subcellular location is the cilium. It is found in the cytoskeleton. The protein localises to the microtubule organizing center. It localises to the centrosome. The protein resides in the spindle. Its subcellular location is the nucleus. GTPase-activating activity is inhibited in the folliculin complex (LFC), which stabilizes the GDP-bound state of RagA/RRAGA (or RagB/RRAGB), because Arg-164 is located far from the RagC/RRAGC or RagD/RRAGD nucleotide pocket. Disassembly of the LFC complex upon amino acid restimulation liberates the GTPase-activating activity. In terms of biological role, multi-functional protein, involved in both the cellular response to amino acid availability and in the regulation of glycolysis. GTPase-activating protein that plays a key role in the cellular response to amino acid availability through regulation of the non-canonical mTORC1 signaling cascade controlling the MiT/TFE factors TFEB and TFE3. Activates mTORC1 by acting as a GTPase-activating protein: specifically stimulates GTP hydrolysis by RagC/RRAGC or RagD/RRAGD, promoting the conversion to the GDP-bound state of RagC/RRAGC or RagD/RRAGD, and thereby activating the kinase activity of mTORC1. The GTPase-activating activity is inhibited during starvation and activated in presence of nutrients. Acts as a key component for non-canonical mTORC1-dependent control of the MiT/TFE factors TFEB and TFE3, while it is not involved in mTORC1-dependent phosphorylation of canonical RPS6KB1/S6K1 and EIF4EBP1/4E-BP1. In low-amino acid conditions, the lysosomal folliculin complex (LFC) is formed on the membrane of lysosomes, which inhibits the GTPase-activating activity of FLCN, inactivates mTORC1 and maximizes nuclear translocation of TFEB and TFE3. Upon amino acid restimulation, RagA/RRAGA (or RagB/RRAGB) nucleotide exchange promotes disassembly of the LFC complex and liberates the GTPase-activating activity of FLCN, leading to activation of mTORC1 and subsequent cytoplasmic retention of TFEB and TFE3. Indirectly acts as a positive regulator of Wnt signaling by promoting mTOR-dependent cytoplasmic retention of MiT/TFE factor TFE3. Required for the exit of hematopoietic stem cell from pluripotency by promoting mTOR-dependent cytoplasmic retention of TFE3, thereby increasing Wnt signaling. Involved in the control of embryonic stem cells differentiation; together with LAMTOR1 it is necessary to recruit and activate RagC/RRAGC and RagD/RRAGD at the lysosomes, and to induce exit of embryonic stem cells from pluripotency via non-canonical, mTOR-independent TFE3 inactivation. Acts as an inhibitor of browning of adipose tissue by regulating mTOR-dependent cytoplasmic retention of TFE3. In response to flow stress, regulates STK11/LKB1 accumulation and mTORC1 activation through primary cilia: may act by recruiting STK11/LKB1 to primary cilia for activation of AMPK resided at basal bodies, causing mTORC1 down-regulation. Together with FNIP1 and/or FNIP2, regulates autophagy: following phosphorylation by ULK1, interacts with GABARAP and promotes autophagy. Required for starvation-induced perinuclear clustering of lysosomes by promoting association of RILP with its effector RAB34. Regulates glycolysis by binding to lactate dehydrogenase LDHA, acting as an uncompetitive inhibitor. The polypeptide is Folliculin (Bos taurus (Bovine)).